We begin with the raw amino-acid sequence, 928 residues long: Heme/hemopexin-binding protein (928 aa).

A signal peptide spans 1–21; it reads MYKLNVISLIILTTCSGAAYA. A run of 10 repeats spans residues 101–106, 149–154, 155–160, 161–166, 167–172, 205–210, 279–284, 410–415, 635–640, and 674–679. Positions 101 to 679 are 6 X 6 AA approximate repeats; sequence NGKVYLANPN…RLGMNGKVSM (579 aa). The 4 X 6 AA approximate tandem repeats stretch occupies residues 149-172; that stretch reads KDRQVLKEGLVLKDGQVVKEGQVI.

The protein resides in the secreted. Its function is as follows. Binds heme/hemopexin complexes. This chain is Heme/hemopexin-binding protein (hxuA), found in Haemophilus influenzae.